Reading from the N-terminus, the 126-residue chain is Fluoride-specific ion channel FluC (126 aa).

4 helical membrane-spanning segments follow: residues 7–27, 36–56, 74–94, and 98–118; these read LWLA…VLLL, FPAA…LTLA, GVLG…GLLL, and GGLA…AAVA. Na(+) is bound by residues glycine 77 and threonine 80.

This sequence belongs to the fluoride channel Fluc/FEX (TC 1.A.43) family.

The protein localises to the cell membrane. The enzyme catalyses fluoride(in) = fluoride(out). With respect to regulation, na(+) is not transported, but it plays an essential structural role and its presence is essential for fluoride channel function. Functionally, fluoride-specific ion channel. Important for reducing fluoride concentration in the cell, thus reducing its toxicity. This chain is Fluoride-specific ion channel FluC, found in Deinococcus radiodurans (strain ATCC 13939 / DSM 20539 / JCM 16871 / CCUG 27074 / LMG 4051 / NBRC 15346 / NCIMB 9279 / VKM B-1422 / R1).